Reading from the N-terminus, the 341-residue chain is Anthranilate phosphoribosyltransferase (341 aa).

5-phospho-alpha-D-ribose 1-diphosphate is bound by residues Gly-81, 84-85 (GD), Thr-89, 91-94 (NIST), 109-117 (KHGSRSVSG), and Ser-121. Gly-81 lines the anthranilate pocket. Ser-93 contributes to the Mg(2+) binding site. Arg-167 provides a ligand contact to anthranilate. Residues Asp-226 and Glu-227 each contribute to the Mg(2+) site.

Belongs to the anthranilate phosphoribosyltransferase family. Homodimer. Requires Mg(2+) as cofactor.

The catalysed reaction is N-(5-phospho-beta-D-ribosyl)anthranilate + diphosphate = 5-phospho-alpha-D-ribose 1-diphosphate + anthranilate. Its pathway is amino-acid biosynthesis; L-tryptophan biosynthesis; L-tryptophan from chorismate: step 2/5. Functionally, catalyzes the transfer of the phosphoribosyl group of 5-phosphorylribose-1-pyrophosphate (PRPP) to anthranilate to yield N-(5'-phosphoribosyl)-anthranilate (PRA). The polypeptide is Anthranilate phosphoribosyltransferase (Methylococcus capsulatus (strain ATCC 33009 / NCIMB 11132 / Bath)).